Here is a 289-residue protein sequence, read N- to C-terminus: Doxorubicin resistance ABC transporter permease protein DrrB (289 aa).

Residues 47–282 (GEVLTTVGAP…FVVILALSST (236 aa)) enclose the ABC transmembrane type-2 domain. 6 helical membrane passes run 49 to 69 (VLTT…PFAI), 88 to 108 (QYIT…GSGF), 138 to 158 (WVAV…GYVI), 166 to 186 (ALYI…LSFA), 199 to 219 (AMLP…IGLM), and 266 to 286 (TLTW…IVLA).

Belongs to the ABC-2 integral membrane protein family. As to quaternary structure, the complex is composed of two ATP-binding proteins (DrrA) and two transmembrane proteins (DrrB and DrrC).

Its subcellular location is the cell membrane. Part of the ABC transporter complex DrrABC involved in doxorubicin resistance. Probably responsible for the translocation of the substrate across the membrane. The polypeptide is Doxorubicin resistance ABC transporter permease protein DrrB (drrB) (Mycobacterium tuberculosis (strain CDC 1551 / Oshkosh)).